Consider the following 136-residue polypeptide: Sec-independent protein translocase protein TatB (136 aa).

Residues 1–21 (MFDIGFPELALVAVIGLLVLG) form a helical membrane-spanning segment. Positions 89–136 (YEDMVEKNPATPMSSKASTPQTPSSGPDPQPVESHSHSDDASKQHDRS) are disordered. Polar residues predominate over residues 99–115 (TPMSSKASTPQTPSSGP). Over residues 122–136 (SHSHSDDASKQHDRS) the composition is skewed to basic and acidic residues.

It belongs to the TatB family. The Tat system comprises two distinct complexes: a TatABC complex, containing multiple copies of TatA, TatB and TatC subunits, and a separate TatA complex, containing only TatA subunits. Substrates initially bind to the TatABC complex, which probably triggers association of the separate TatA complex to form the active translocon.

The protein localises to the cell inner membrane. Functionally, part of the twin-arginine translocation (Tat) system that transports large folded proteins containing a characteristic twin-arginine motif in their signal peptide across membranes. Together with TatC, TatB is part of a receptor directly interacting with Tat signal peptides. TatB may form an oligomeric binding site that transiently accommodates folded Tat precursor proteins before their translocation. In Hahella chejuensis (strain KCTC 2396), this protein is Sec-independent protein translocase protein TatB.